A 500-amino-acid polypeptide reads, in one-letter code: MVLFHSQASCCKRVKADAIVLPFWQVQDKVRCAASIVEEYEPLYQVALENFAGKTGEAELIYSYGQGKEKRILLLGLGKNEELSSQDVLEAYAKATRILRKAKCTTVNIVLPVISELRISAEDFLSNLTSGILSLNYNYPKYTKECQSSEPLLTKVTVLGIVPKIADRIFRKEESIFEGVYLTRDLVNGNADEVTPQKLANIAKGLAKEFPSVDAKILNKDAILKEKMGLLAAVAKGSAVDPCFIVLSYQGKPKSKDHTVLIGKGVTFDSGGLDLKPGKAMLTMKEDMAGAATALGILSGVAALELPVNVTAIIPATENAIDGASYKMGDVYIGMSGLSVEIGSTDAEGRLILADAITYALKYCKPTRIIDFATLTGAMVVSLGESVAGFFSNNDVLAQDLSEASAETGEALWRLPLVEKYDKALQSDIADMKNIGSNRAGAITAALFLRRFLEDQPVAWAHLDIAGTAYREKDEDPYPKYASGFGVRCLIYYIEKFLSK.

Residues lysine 264 and aspartate 269 each contribute to the Mn(2+) site. Lysine 276 is an active-site residue. Residues aspartate 287, aspartate 346, and glutamate 348 each contribute to the Mn(2+) site. Residue arginine 350 is part of the active site.

This sequence belongs to the peptidase M17 family. Mn(2+) serves as cofactor.

The protein localises to the cytoplasm. It catalyses the reaction Release of an N-terminal amino acid, Xaa-|-Yaa-, in which Xaa is preferably Leu, but may be other amino acids including Pro although not Arg or Lys, and Yaa may be Pro. Amino acid amides and methyl esters are also readily hydrolyzed, but rates on arylamides are exceedingly low.. The catalysed reaction is Release of an N-terminal amino acid, preferentially leucine, but not glutamic or aspartic acids.. Functionally, presumably involved in the processing and regular turnover of intracellular proteins. Catalyzes the removal of unsubstituted N-terminal amino acids from various peptides. The polypeptide is Probable cytosol aminopeptidase (Chlamydia felis (strain Fe/C-56) (Chlamydophila felis)).